The chain runs to 546 residues: EH domain-containing protein 2 (546 aa).

EF-hand domains are found at residues 15-50 (EHQK…SKLS) and 51-84 (RQEL…VSLA). The region spanning 16 to 94 (HQKIYKEWFN…QEGHEITSDL (79 aa)) is the EH domain. The Ca(2+) site is built by Asp-28, Asp-30, Asp-32, Arg-34, Asp-39, Asp-62, and Glu-73. Residues 194–430 (FDAKPMVMLL…LLADLMDVPK (237 aa)) enclose the Dynamin-type G domain. The G1 motif stretch occupies residues 204 to 211 (GQYSTGKT). Position 204–211 (204–211 (GQYSTGKT)) interacts with GTP. Residues 230–231 (EP) form a G2 motif region. The tract at residues 292–295 (DTPG) is G3 motif. Residues 292–296 (DTPGV) and Lys-359 each bind GTP. The segment at 358–361 (NKAD) is G4 motif. Position 382 (Val-382) is a region of interest, G5 motif. GTP is bound at residue 395–398 (SFND). A Nuclear localization signal motif is present at residues 429–436 (PKKACDRK). Residues 467–490 (KSKAQQRLMDNLEEEFGKVQREFH) are a coiled coil.

The protein belongs to the TRAFAC class dynamin-like GTPase superfamily. Dynamin/Fzo/YdjA family. EHD subfamily. As to quaternary structure, homooligomer, and heterooligomer with EHD1. Interacts with AP-4 complex subunit sigma (At2g19790).

It localises to the endosome membrane. It is found in the cell membrane. Its subcellular location is the nucleus. The protein localises to the cytoplasm. The enzyme catalyses GTP + H2O = GDP + phosphate + H(+). In terms of biological role, involved in endocytosis negative regulation, probably by influencing actin organization. Acts in early endocytic membrane fusion and membrane trafficking of recycling endosomes. Exhibits an inhibitory effect on endocytosis when over-expressed. In Arabidopsis thaliana (Mouse-ear cress), this protein is EH domain-containing protein 2.